The primary structure comprises 249 residues: 1-(5-phosphoribosyl)-5-[(5-phosphoribosylamino)methylideneamino] imidazole-4-carboxamide isomerase (249 aa).

D8 acts as the Proton acceptor in catalysis. Residue D129 is the Proton donor of the active site.

It belongs to the HisA/HisF family.

It is found in the cytoplasm. It carries out the reaction 1-(5-phospho-beta-D-ribosyl)-5-[(5-phospho-beta-D-ribosylamino)methylideneamino]imidazole-4-carboxamide = 5-[(5-phospho-1-deoxy-D-ribulos-1-ylimino)methylamino]-1-(5-phospho-beta-D-ribosyl)imidazole-4-carboxamide. Its pathway is amino-acid biosynthesis; L-histidine biosynthesis; L-histidine from 5-phospho-alpha-D-ribose 1-diphosphate: step 4/9. This chain is 1-(5-phosphoribosyl)-5-[(5-phosphoribosylamino)methylideneamino] imidazole-4-carboxamide isomerase, found in Magnetococcus marinus (strain ATCC BAA-1437 / JCM 17883 / MC-1).